We begin with the raw amino-acid sequence, 130 residues long: MKFIYKLLFILSIVLFLFNNIITINGEIEEVEEINDECSGVRCDKVDKLLCLTSHRPVARYIDRKMAKEKNVLLCCPICLIPSTSFCNHSTSSLHDPKLKYLSGNVYTCYDGEKECNLHTNECEILPQYR.

An N-terminal signal peptide occupies residues 1-26 (MKFIYKLLFILSIVLFLFNNIITING). Asn-88 carries N-linked (GlcNAc...) asparagine glycosylation.

It is found in the secreted. This is an uncharacterized protein from Dictyostelium discoideum (Social amoeba).